Consider the following 341-residue polypeptide: S-adenosylmethionine:tRNA ribosyltransferase-isomerase (341 aa).

It belongs to the QueA family. As to quaternary structure, monomer.

It localises to the cytoplasm. It carries out the reaction 7-aminomethyl-7-carbaguanosine(34) in tRNA + S-adenosyl-L-methionine = epoxyqueuosine(34) in tRNA + adenine + L-methionine + 2 H(+). Its pathway is tRNA modification; tRNA-queuosine biosynthesis. Its function is as follows. Transfers and isomerizes the ribose moiety from AdoMet to the 7-aminomethyl group of 7-deazaguanine (preQ1-tRNA) to give epoxyqueuosine (oQ-tRNA). The chain is S-adenosylmethionine:tRNA ribosyltransferase-isomerase from Staphylococcus epidermidis (strain ATCC 35984 / DSM 28319 / BCRC 17069 / CCUG 31568 / BM 3577 / RP62A).